Here is a 444-residue protein sequence, read N- to C-terminus: D(2) dopamine receptor (444 aa).

Residues M1–Y37 lie on the Extracellular side of the membrane. N5, N17, and N23 each carry an N-linked (GlcNAc...) asparagine glycan. A helical transmembrane segment spans residues A38–S60. Residues R61–N70 are Cytoplasmic-facing. The chain crosses the membrane as a helical span at residues Y71 to Y93. At L94–D108 the chain is on the extracellular side. C107 and C182 form a disulfide bridge. Residues I109–I130 traverse the membrane as a helical segment. Over D131–R151 the chain is Cytoplasmic. Residues V152 to F172 form a helical membrane-spanning segment. Topologically, residues G173–A188 are extracellular. Residues F189 to Y213 traverse the membrane as a helical segment. The tract at residues K211 to Q374 is interaction with PPP1R9B. Residues I214–Q374 lie on the Cytoplasmic side of the membrane. Residues M281–K332 form a disordered region. The helical transmembrane segment at M375 to L396 threads the bilayer. Residues N397 to S410 are Extracellular-facing. Cysteines 400 and 402 form a disulfide. Residues A411 to I432 traverse the membrane as a helical segment. Residues E433–C444 lie on the Cytoplasmic side of the membrane. The S-palmitoyl cysteine moiety is linked to residue C444.

The protein belongs to the G-protein coupled receptor 1 family. In terms of assembly, forms homo- and heterooligomers with DRD4. The interaction with DRD4 may modulate agonist-induced downstream signaling. Interacts with CADPS and CADPS2. Interacts with GPRASP1, PPP1R9B and CLIC6. Interacts with ARRB2. Interacts with HTR2A. Interacts with DRD1. Interacts with KCNA2. Post-translationally, palmitoylated. Palmitoylation which is required for proper localization to the plasma membrane and stability of the receptor could be carried on by ZDHHC4, ZDHHC3 and ZDHHC8.

The protein resides in the cell membrane. Its subcellular location is the golgi apparatus membrane. In terms of biological role, dopamine receptor whose activity is mediated by G proteins which inhibit adenylyl cyclase. Positively regulates postnatal regression of retinal hyaloid vessels via suppression of VEGFR2/KDR activity, downstream of OPN5. This chain is D(2) dopamine receptor (DRD2), found in Bos taurus (Bovine).